Reading from the N-terminus, the 515-residue chain is MNAIIAEPGHVSFDDLARVYAGAAIALGPAYWPRVEAAAAIVAKAAQGAEPVYGINTGFGKLASKRIPPDQTALLQRNLILSHCCGVGPATPEPIVRLMIALKIISLGRGASGVRRQIVDQLQAMLAQGVCPFVPQQGSVGASGDLAPLAHMTAVMIGEGQAFVEGRLVPGREALAHVGLDPVTLGPKEGLALINGTQFSTAYALAGLFRARDLLNAALVTGALSVDAAMASTAPFRPEIQALRGHPGQIAAGRVLTELVDGSAIRLSHLEGDERVQDPYCLRCQPQVAGAALDLLTQAARTLVNEANAVTDNPLVLVETGEIISGGNFHAEPVAFAADQIALALSELGAISERRIATLVDPALNFGLPPFLTPQPGLNSGFMIAEVTAAALFAENKQRALPCSIDSTPTSANQEDHVSMAAHAARRLHDMADNLAHIIGIELLVAAQGIELRVPHGTSAALSAVIGALRSHVPALESDRYMADDLAKAAALVAGGALARAANVALGRDSFPRLG.

A cross-link (5-imidazolinone (Ala-Gly)) is located at residues 142-144 (ASG). Serine 143 is subject to 2,3-didehydroalanine (Ser).

The protein belongs to the PAL/histidase family. Post-translationally, contains an active site 4-methylidene-imidazol-5-one (MIO), which is formed autocatalytically by cyclization and dehydration of residues Ala-Ser-Gly.

It localises to the cytoplasm. The enzyme catalyses L-histidine = trans-urocanate + NH4(+). It functions in the pathway amino-acid degradation; L-histidine degradation into L-glutamate; N-formimidoyl-L-glutamate from L-histidine: step 1/3. This chain is Histidine ammonia-lyase, found in Bradyrhizobium sp. (strain ORS 278).